The sequence spans 305 residues: Methionyl-tRNA formyltransferase (305 aa).

(6S)-5,6,7,8-tetrahydrofolate is bound at residue 111–114; that stretch reads SLLP.

It belongs to the Fmt family.

The enzyme catalyses L-methionyl-tRNA(fMet) + (6R)-10-formyltetrahydrofolate = N-formyl-L-methionyl-tRNA(fMet) + (6S)-5,6,7,8-tetrahydrofolate + H(+). Its function is as follows. Attaches a formyl group to the free amino group of methionyl-tRNA(fMet). The formyl group appears to play a dual role in the initiator identity of N-formylmethionyl-tRNA by promoting its recognition by IF2 and preventing the misappropriation of this tRNA by the elongation apparatus. This chain is Methionyl-tRNA formyltransferase, found in Campylobacter jejuni subsp. doylei (strain ATCC BAA-1458 / RM4099 / 269.97).